Consider the following 423-residue polypeptide: Cytochrome c biogenesis protein Ccs1 (423 aa).

Transmembrane regions (helical) follow at residues 11 to 31, 70 to 90, and 153 to 173; these read LKFA…GSII, NFWF…CTFF, and IAPV…IFAS.

It belongs to the Ccs1/CcsB family. As to quaternary structure, may interact with CcsA.

It is found in the plastid. It localises to the chloroplast thylakoid membrane. Its function is as follows. Required during biogenesis of c-type cytochromes (cytochrome c6 and cytochrome f) at the step of heme attachment. The chain is Cytochrome c biogenesis protein Ccs1 from Heterosigma akashiwo (strain NIES-293 / 8280G21-1).